A 688-amino-acid chain; its full sequence is NADH-ubiquinone oxidoreductase 75 kDa subunit (688 aa).

Positions 1–85 constitute a 2Fe-2S ferredoxin-type domain; the sequence is MLIRFKINEI…DESIETEIDE (85 aa). Cysteine 38, cysteine 49, cysteine 52, and cysteine 66 together coordinate [2Fe-2S] cluster. The 4Fe-4S His(Cys)3-ligated-type domain occupies 85–124; sequence EILKAREGVMEFLLINHPLDCPICDQGGECDLQEQTIAYG. Residues histidine 101, cysteine 105, cysteine 108, cysteine 114, cysteine 153, cysteine 156, cysteine 159, and cysteine 204 each contribute to the [4Fe-4S] cluster site. A 4Fe-4S Mo/W bis-MGD-type domain is found at 223–279; it reads LKNIKGIDIFDTVLTPINYQVKGGEIFRILPRINDRLNEEWITDKVRFHYESYKIIE.

It belongs to the complex I 75 kDa subunit family. As to quaternary structure, complex I is composed of about 45 different subunits. Requires [2Fe-2S] cluster as cofactor. The cofactor is [4Fe-4S] cluster.

Its subcellular location is the mitochondrion inner membrane. The enzyme catalyses a ubiquinone + NADH + 5 H(+)(in) = a ubiquinol + NAD(+) + 4 H(+)(out). Core subunit of the mitochondrial membrane respiratory chain NADH dehydrogenase (Complex I) that is believed to belong to the minimal assembly required for catalysis. Complex I functions in the transfer of electrons from NADH to the respiratory chain. The immediate electron acceptor for the enzyme is believed to be ubiquinone. This is the largest subunit of complex I and it is a component of the iron-sulfur (IP) fragment of the enzyme. It may form part of the active site crevice where NADH is oxidized. The chain is NADH-ubiquinone oxidoreductase 75 kDa subunit (nad11) from Dictyostelium citrinum (Slime mold).